Here is a 205-residue protein sequence, read N- to C-terminus: Ypt/Rab-type GTPase ypt7 (205 aa).

Residues 17–23 (SGVGKTS), 33–40 (FSASYKAT), Gly66, 125–128 (NKID), and 157–159 (SAK) each bind GTP. Residues 37 to 45 (YKATIGADF) carry the Effector region motif. 2 S-geranylgeranyl cysteine lipidation sites follow: Cys203 and Cys205. At Cys205 the chain carries Cysteine methyl ester.

The protein belongs to the small GTPase superfamily. Rab family. Interacts with the Rab GDP dissociation inhibitor GDI1.

It localises to the vacuole. With respect to regulation, rab activation is generally mediated by a guanine exchange factor (GEF), while inactivation through hydrolysis of bound GTP is catalyzed by a GTPase activating protein (GAP). In terms of biological role, ypt/Rab-type GTPases are key regulators of membrane trafficking and intracellular vesicular transport. They act as molecular switches that convert between GTP-bound and GDP-bound states, and regulate virtually all steps of membrane traffic from the formation of the transport vesicle at the donor membrane to its fusion at the target membrane. In the GDP-bound state, Ypt proteins are predominantly cytosolic, solubilized through the interaction with a GDP dissociation inhibitor (GDI). In the GTP-bound state, the proteins are membrane bound and interact with specific effector proteins that select cargo, promote vesicle movement, or verify the correct site of fusion. Required for fungal morphogenesis, vacuole fusion, autophagy, stress resistance and pathogenicity. This is Ypt/Rab-type GTPase ypt7 from Pyricularia oryzae (strain 70-15 / ATCC MYA-4617 / FGSC 8958) (Rice blast fungus).